Consider the following 80-residue polypeptide: Cell division protein ZapB (80 aa).

Positions 3–80 form a coiled coil; sequence FEVFEKLEAK…ALLGKMEDVQ (78 aa).

It belongs to the ZapB family. As to quaternary structure, homodimer. The ends of the coiled-coil dimer bind to each other, forming polymers. Interacts with FtsZ.

Its subcellular location is the cytoplasm. Non-essential, abundant cell division factor that is required for proper Z-ring formation. It is recruited early to the divisome by direct interaction with FtsZ, stimulating Z-ring assembly and thereby promoting cell division earlier in the cell cycle. Its recruitment to the Z-ring requires functional FtsA or ZipA. This chain is Cell division protein ZapB, found in Photorhabdus laumondii subsp. laumondii (strain DSM 15139 / CIP 105565 / TT01) (Photorhabdus luminescens subsp. laumondii).